The following is a 1399-amino-acid chain: MKDLLNLLKNQGQVEEFDAIRIGLASPEMIRSWSFGEVKKPETINYRTFKPERDGLFCAKIFGPVKDYECLCGKYKRLKHRGVICEKCGVEVALAKVRRERMAHIELASPVAHIWFLKSLPSRIGLLMDMTLRDIERVLYFESYVVIDPGMTTLEKGQLLNDEQYFEALEEFGDDFDARMGAEAVRELLHAIDLEHEIGRLREEIPQTNSETKIKKLSKRLKLMEAFQGSGNLPEWMVLTVLPVLPPDLRPLVPLDGGRFATSDLNDLYRRVINRNNRLKRLLDLSAPDIIVRNEKRMLQEAVDALLDNGRRGRAITGSNKRPLKSLADMIKGKQGRFRQNLLGKRVDYSGRSVITVGPTLRLHQCGLPKKMALELFKPFIFGKLEMRGLATTIKAAKKMVERELPEVWDVLAEVIREHPVLLNRAPTLHRLGIQAFEPVLIEGKAIQLHPLVCAAYNADFDGDQMAVHVPLTLEAQLEARALMMSTNNILSPANGEPIIVPSQDVVLGLYYMTREAINAKGEGRVFADLQEVDRVFRAGEAALHAKVKVRIHETVNDRDGGSVKNTRIVDTTVGRALLFQVVPAGLSYDVVNQPMKKKAISKLINQCYRVVGLKETVIFADQLMYTGFAYSTISGVSIGVNDFVIPDEKARIIDAATEEVKEIESQYASGLVTQGEKYNKVIDLWSKANDEVSKAMMSNLSKERVIDRHGVEVDQESFNSMYMMADSGARGSAAQIRQLAGMRGLMAKPDGSIIETPITANFREGLSVLQYFISTHGARKGLADTALKTANSGYLTRRLVDVAQDLVVTEVDCGTEHGLLMTPHIEGGDVVEPLGERVLGRVIARDVFKPGTEDVIVPAGTLVDEKWVEFIELNSIDEVIVRSPISCETRYGICAKCYGRDLARGHQVNIGEAVGVIAAQSIGEPGTQLTMRTFHIGGAASRTSAADSVQVKNGGTVRLHNLKHVERVDGHLVAVSRSGELAIADDFGRERERYKLPYGAVISVKEGDKVDAGSIVAKWDPHTHPIVTEMKGTVTYVGMEEGITIKRQTDELTGMTNIEVLDAKDRPAAGKDIRPAVKMVGLDGKDLLLPGTDVPAQYFLPANALVGVADGAQIAIGDVIARIPQETSKTRDITGGLPRVADLFEARRPKEASILAEVSGTIAFGKETKGKRRLVITPNDGSDPYEELIPKWRHLNVFEGEQVNRGEVISDGPSDPHDILRLLGVSALAKYIVNEIQDVYRLQGVKINDKHIETILRQMLRKVEIAESGDSSFIKGDQMELTHVLVENERLSTEDKFVSKFTRVLLGITKASLSTESFISAASFQETTRVLTEAAVTGKRDYLRGLKENVVVGRLIPAGTGLAYHSERKRRREMDKPTRVSASEVEAALTEALNSSGN.

Zn(2+)-binding residues include Cys70, Cys72, Cys85, and Cys88. Residues Asp460, Asp462, and Asp464 each coordinate Mg(2+). Positions 814, 888, 895, and 898 each coordinate Zn(2+).

This sequence belongs to the RNA polymerase beta' chain family. In terms of assembly, the RNAP catalytic core consists of 2 alpha, 1 beta, 1 beta' and 1 omega subunit. When a sigma factor is associated with the core the holoenzyme is formed, which can initiate transcription. Mg(2+) serves as cofactor. The cofactor is Zn(2+).

The enzyme catalyses RNA(n) + a ribonucleoside 5'-triphosphate = RNA(n+1) + diphosphate. Functionally, DNA-dependent RNA polymerase catalyzes the transcription of DNA into RNA using the four ribonucleoside triphosphates as substrates. This chain is DNA-directed RNA polymerase subunit beta', found in Pseudomonas syringae pv. syringae (strain B728a).